Reading from the N-terminus, the 405-residue chain is Tyrosine--tRNA ligase (405 aa).

Position 35 (tyrosine 35) interacts with L-tyrosine. A 'HIGH' region motif is present at residues 40 to 49 (ATSSSLHIGH). Positions 166 and 170 each coordinate L-tyrosine. Residues 226-230 (KMGKS) carry the 'KMSKS' region motif. Lysine 229 contacts ATP. The S4 RNA-binding domain maps to 340 to 404 (VLLINLMLDS…VGKKKFLRIV (65 aa)).

It belongs to the class-I aminoacyl-tRNA synthetase family. TyrS type 1 subfamily. In terms of assembly, homodimer.

Its subcellular location is the cytoplasm. It catalyses the reaction tRNA(Tyr) + L-tyrosine + ATP = L-tyrosyl-tRNA(Tyr) + AMP + diphosphate + H(+). Catalyzes the attachment of tyrosine to tRNA(Tyr) in a two-step reaction: tyrosine is first activated by ATP to form Tyr-AMP and then transferred to the acceptor end of tRNA(Tyr). The sequence is that of Tyrosine--tRNA ligase from Borreliella afzelii (strain PKo) (Borrelia afzelii).